Reading from the N-terminus, the 22-residue chain is Fuctinin-1 (22 aa).

Residues 1–22 form a disordered region; that stretch reads SASPGLPKGEKEQQEAIEHIDE. Residues 8 to 22 show a composition bias toward basic and acidic residues; sequence KGEKEQQEAIEHIDE.

This sequence to human SET/PHAPII protein. As to quaternary structure, oligomer.

Its subcellular location is the cytoplasm. Its function is as follows. Has a role in the physiological regulation of fucosylation processes. This chain is Fuctinin-1, found in Rattus norvegicus (Rat).